The sequence spans 251 residues: BRI3-binding protein (251 aa).

Helical transmembrane passes span 13-33, 125-145, 146-166, and 185-205; these read AGLLLLLLLLLLLGLLAPGAQ, ALLLVGVVLLAYWFLSLTLGF, TFSVLHVVFGRFFWIVRVVLF, and VLPLCFVVAVYFMTGPMGFYW. Residues 217 to 247 adopt a coiled-coil conformation; sequence NPSVEEKLEHLEKQVRLLNIRLNRVLESLDR. Position 229 is an N6-acetyllysine (Lys229). A Phosphoserine modification is found at Ser248.

In terms of assembly, interacts with LETMD1. Interacts with BRI3 (isoforms 1 and 2); the interaction with isoform 2 is weaker than with isoform 1. Interacts with BRI3; the interaction is weak. Interacts with TMEM238L. As to expression, most abundantly expressed in brain, liver and kidney. Overexpressed in leukemia and lymphoma cell lines, as well as in various carcinomas.

It is found in the mitochondrion outer membrane. Functionally, involved in tumorigenesis and may function by stabilizing p53/TP53. The sequence is that of BRI3-binding protein from Homo sapiens (Human).